A 546-amino-acid chain; its full sequence is Thermolysin (546 aa).

The first 25 residues, 1–25 (MDKRAMLGAIGLAFGLMAWPFGASA), serve as a signal peptide directing secretion. The propeptide at 26–228 (KEKSMVWNEQ…EAKPGGGQPV (203 aa)) is activation peptide. Residues Asp287, Asp289, Gln291, and Asp368 each coordinate Ca(2+). Zn(2+) is bound at residue His372. The active site involves Glu373. Residues His376 and Glu396 each coordinate Zn(2+). Ca(2+)-binding residues include Asn413, Asp415, Glu417, Glu420, Tyr423, Thr424, Ile427, and Asp430. The active-site Proton donor is the His461.

This sequence belongs to the peptidase M4 family. The cofactor is Ca(2+). Zn(2+) serves as cofactor.

It localises to the secreted. It carries out the reaction Preferential cleavage: Xaa-|-Leu &gt; Xaa-|-Phe.. Its function is as follows. Extracellular zinc metalloprotease. The polypeptide is Thermolysin (npr) (Bacillus caldolyticus).